The sequence spans 245 residues: Bax inhibitor 1 (245 aa).

At 1-30 (MADTANYINDRFQTFMNGLGDRYEPYVREH) the chain is on the cytoplasmic side. A helical transmembrane segment spans residues 31-51 (LSKVYMVLGSTAAATAMGAML). Residues 52–55 (QMRD) are Lumenal-facing. A helical transmembrane segment spans residues 56–76 (FLDLGVLAAVATLVLVLGLHF). Over 77–88 (YKDDGKNYYTRL) the chain is Cytoplasmic. Residues 89 to 109 (GMLYAFGFCSGQTLGPLLGYI) form a helical membrane-spanning segment. Residues 110 to 115 (CSINPA) are Lumenal-facing. A helical membrane pass occupies residues 116–136 (IILSALTGTFVTFISLSLSAL). Residues 137–142 (LAEQGK) are Cytoplasmic-facing. Residues 143-163 (YLYLGGMLVSVINTMALLSLF) traverse the membrane as a helical segment. At 164–169 (NMVFKS) the chain is on the lumenal side. The helical transmembrane segment at 170 to 190 (YFVQVTQLYVGVFVMAAFIVY) threads the bilayer. The Cytoplasmic portion of the chain corresponds to 191–245 (DTQNIVEKCRNGNRDVVQHALDLFFDVLSMFRRLLIILTQKEERKQNERRQNKTK).

This sequence belongs to the BI1 family.

Its subcellular location is the endoplasmic reticulum membrane. In terms of biological role, suppressor of apoptosis. Modulates unfolded protein response signaling. Negatively regulates autophagy and autophagosome formation, especially during periods of nutrient deprivation, and reduces cell survival during starvation. In Drosophila melanogaster (Fruit fly), this protein is Bax inhibitor 1.